Reading from the N-terminus, the 768-residue chain is Ribonucleoside-diphosphate reductase large chain (768 aa).

ATP contacts are provided by residues 7 to 8 (SK) and 13 to 19 (EKLGIDL). GDP is bound by residues Thr196 and Ser211. A disulfide bridge connects residues Cys212 and Cys437. DTTP contacts are provided by residues 220 to 222 (DSI), Lys237, and Arg250. Residue Asn420 coordinates GDP. Asn420 serves as the catalytic Proton acceptor. Cys422 functions as the Cysteine radical intermediate in the catalytic mechanism. Glu424 lines the GDP pocket. Glu424 (proton acceptor) is an active-site residue.

Belongs to the ribonucleoside diphosphate reductase large chain family. Heterodimer of a large and a small subunit.

The enzyme catalyses a 2'-deoxyribonucleoside 5'-diphosphate + [thioredoxin]-disulfide + H2O = a ribonucleoside 5'-diphosphate + [thioredoxin]-dithiol. Under complex allosteric control mediated by deoxynucleoside triphosphates and ATP binding to separate specificity and activation sites on the large subunit. The type of nucleotide bound at the specificity site determines substrate preference. It seems probable that ATP makes the enzyme reduce CDP and UDP, dGTP favors ADP reduction and dTTP favors GDP reduction. Stimulated by ATP and inhibited by dATP binding to the activity site. Its function is as follows. Provides the precursors necessary for DNA synthesis. Catalyzes the biosynthesis of deoxyribonucleotides from the corresponding ribonucleotides. The protein is Ribonucleoside-diphosphate reductase large chain of Encephalitozoon cuniculi (strain GB-M1) (Microsporidian parasite).